We begin with the raw amino-acid sequence, 136 residues long: Histone H3.3 type c (136 aa).

The tract at residues 1–30 (MARTKQTARKSTGAKVPRKHLSSKSSFPSK) is disordered. Lys-5 carries the N6,N6,N6-trimethyllysine; by set1; alternate modification. At Lys-5 the chain carries N6,N6-dimethyllysine; by set1; alternate. N6-acetyllysine; alternate is present on residues Lys-5 and Lys-10. At Lys-5 the chain carries N6-methyllysine; by set1; alternate. Position 10 is an N6,N6,N6-trimethyllysine; alternate (Lys-10). Position 10 is an N6,N6-dimethyllysine; alternate (Lys-10). Lys-10 is modified (N6-methyllysine; alternate). At Ser-11 the chain carries Phosphoserine. N6-acetyllysine is present on Lys-15. An N6-acetyllysine; alternate mark is found at Lys-19, Lys-24, and Lys-37. N6-methyllysine; alternate is present on residues Lys-19, Lys-24, and Lys-37. Lys-37 is modified (N6,N6,N6-trimethyllysine; alternate). Lys-37 is subject to N6,N6-dimethyllysine; alternate. N6-acetyllysine is present on Lys-57. Position 80 is an N6,N6,N6-trimethyllysine; alternate (Lys-80). At Lys-80 the chain carries N6,N6-dimethyllysine; alternate. N6-methyllysine; alternate is present on Lys-80.

The protein belongs to the histone H3 family. In terms of assembly, the nucleosome is a histone octamer containing two molecules each of H2A, H2B, H3 and H4 assembled in one H3-H4 heterotetramer and two H2A-H2B heterodimers. The octamer wraps approximately 147 bp of DNA. Post-translationally, acetylation is generally linked to gene activation. Different methylation states of H3K4 mark distinct developmental phases. H3K4me2 is associated with euchromatic regions. H3K4me3 is a mark of active chromatin. set1 is responsible for all mono-, di- and tri-methylation of H3K4. H3K4me facilitates subsequent acetylation of H3 and H4. Methylation at H3K9 is linked to gene repression. In terms of processing, H3S10ph, which is linked to gene activation, prevents methylation at H3K9 but facilitates acetylation of H3 and H4.

Its subcellular location is the nucleus. The protein resides in the chromosome. In terms of biological role, core component of nucleosome. Nucleosomes wrap and compact DNA into chromatin, limiting DNA accessibility to the cellular machineries which require DNA as a template. Histones thereby play a central role in transcription regulation, DNA repair, DNA replication and chromosomal stability. DNA accessibility is regulated via a complex set of post-translational modifications of histones, also called histone code, and nucleosome remodeling. The polypeptide is Histone H3.3 type c (H3c) (Dictyostelium discoideum (Social amoeba)).